A 426-amino-acid polypeptide reads, in one-letter code: Pyruvate, phosphate dikinase regulatory protein, chloroplastic (426 aa).

A chloroplast-targeting transit peptide spans 1 to 41; it reads MIGCAKPLAAPLQAWARPPSPAGRRLPPSFCAPDTSPALTR. 2 disordered regions span residues 1 to 76 and 94 to 124; these read MIGC…HLDR and AALS…DGED. Positions 94 to 119 are enriched in low complexity; the sequence is AALSSASVSAPPVIKSPRPEDAAVAA. Position 153–160 (153–160) interacts with ADP; sequence HSVNAALG.

This sequence belongs to the pyruvate, phosphate/water dikinase regulatory protein family. PDRP subfamily. Homodimer at pH 7.5 and homotetramer at pH 8.3. Mg(2+) is required as a cofactor. In terms of tissue distribution, leaf mesophyll-cells.

It is found in the plastid. Its subcellular location is the chloroplast stroma. The catalysed reaction is N(tele)-phospho-L-histidyl/L-threonyl-[pyruvate, phosphate dikinase] + ADP = N(tele)-phospho-L-histidyl/O-phospho-L-threonyl-[pyruvate, phosphate dikinase] + AMP + H(+). The enzyme catalyses N(tele)-phospho-L-histidyl/O-phospho-L-threonyl-[pyruvate, phosphate dikinase] + phosphate + H(+) = N(tele)-phospho-L-histidyl/L-threonyl-[pyruvate, phosphate dikinase] + diphosphate. It participates in photosynthesis; C4 acid pathway. Regulated by light/dark exposure. Its function is as follows. Bifunctional serine/threonine kinase and phosphorylase involved in the dark/light-mediated regulation of PPDK by catalyzing its phosphorylation/dephosphorylation. Dark/light-induced changes in stromal concentrations of the competing ADP and Pi substrates govern the direction of the reaction. In the dark, phosphorylates the catalytic intermediate of PPDK (PPDK-HisP), inactivating it. Light exposure induces the phosphorolysis reaction that reactivates PPDK. Phosphorylates PPDK at both Ser-528 and Thr-527. Can use ADP as a high specificity substrate and GDP as a lower affinity substrate, but has no activity with UDP. The sequence is that of Pyruvate, phosphate dikinase regulatory protein, chloroplastic (PDRP1) from Zea mays (Maize).